A 511-amino-acid polypeptide reads, in one-letter code: Sorting nexin MVP1 (511 aa).

The disordered stretch occupies residues 1-36 (MDNYEGSDPWNTSSNAWTKDDDHVVSTTNSEPSLNG). Polar residues predominate over residues 25-36 (VSTTNSEPSLNG). The PX domain maps to 128-247 (DADIIIIEEI…TFLTVRTDLT (120 aa)). A 1,2-diacyl-sn-glycero-3-phospho-(1D-myo-inositol-3-phosphate) is bound by residues arginine 172, serine 174, lysine 198, and arginine 213.

It belongs to the sorting nexin family. In terms of assembly, homodimer. Forms an autoinhibited tetramer consisting of 2 homodimers that self-interact, wherein the membrane-interacting BAR surfaces are sequestered and the PX lipid-binding sites are occluded. Interacts with VPS1.

It localises to the cytoplasm. Its subcellular location is the endosome membrane. In terms of biological role, required for vacuolar protein sorting. Component of the retromer-mediated endosome-to-Golgi retrograde pathway. Required for efficient cargo export from the endosome, promoting VPS1-mediated fission of retromer-coated tubules that bud from the endosome. In Saccharomyces cerevisiae (strain ATCC 204508 / S288c) (Baker's yeast), this protein is Sorting nexin MVP1 (MVP1).